A 380-amino-acid polypeptide reads, in one-letter code: MAPTIRKSHPLLKIINGSFIDLPTPANISAWWNFGSLLGVCLIAQIATGLFLAMHYTADTSLAFSSVAHICRDVNNGWLLRNLHANGASFFFICIYFHIGRGLYYGSYLYKETWNIGVILLFLVMATAFVGYVLPWGQMSFWGATVITNLLSAAPYIGPDLVQWIWGGFSVDNSTLTRFFTFHFILPFIIAAASMIHLLFLHQTGSSNPTGLNSNLDKVSFHPYFSYKDLLGFVIMLGALASLSTFAPNLLGDPDNFTPANPLVTPPHIKPEWYFLFAYAILRSIPNKLGGVLALLLSIMVLFLMPIIHTSKLRSLMFRPIAKTFFWALIANTAILTWIGGQPVEDPFITIGQIASGLYFLIFVLLIPSLGLLENKLLKI.

The next 4 helical transmembrane spans lie at 34 to 54 (FGSL…FLAM), 78 to 99 (WLLR…YFHI), 114 to 134 (WNIG…GYVL), and 179 to 199 (FFTF…IHLL). Heme b-binding residues include His84 and His98. Heme b contacts are provided by His183 and His197. His202 lines the a ubiquinone pocket. 4 helical membrane passes run 227–247 (YKDL…STFA), 289–309 (LGGV…PIIH), 321–341 (IAKT…WIGG), and 348–368 (FITI…LLIP).

This sequence belongs to the cytochrome b family. The cytochrome bc1 complex contains 3 respiratory subunits (MT-CYB, CYC1 and UQCRFS1), 2 core proteins (UQCRC1 and UQCRC2) and probably 6 low-molecular weight proteins. Heme b is required as a cofactor.

It is found in the mitochondrion inner membrane. Component of the ubiquinol-cytochrome c reductase complex (complex III or cytochrome b-c1 complex) that is part of the mitochondrial respiratory chain. The b-c1 complex mediates electron transfer from ubiquinol to cytochrome c. Contributes to the generation of a proton gradient across the mitochondrial membrane that is then used for ATP synthesis. The polypeptide is Cytochrome b (mt-cyb) (Pelophylax nigromaculatus (Black-spotted frog)).